The sequence spans 149 residues: Pleckstrin homology domain-containing family J member 1 (149 aa).

Residues 15–108 (RAEKAAELSM…WVEALTNASY (94 aa)) enclose the PH domain.

This is Pleckstrin homology domain-containing family J member 1 (plekhj1) from Xenopus tropicalis (Western clawed frog).